The following is a 167-amino-acid chain: Protein-export protein SecB (167 aa).

The protein belongs to the SecB family. Homotetramer, a dimer of dimers. One homotetramer interacts with 1 SecA dimer.

It localises to the cytoplasm. In terms of biological role, one of the proteins required for the normal export of preproteins out of the cell cytoplasm. It is a molecular chaperone that binds to a subset of precursor proteins, maintaining them in a translocation-competent state. It also specifically binds to its receptor SecA. The protein is Protein-export protein SecB of Wolbachia sp. subsp. Brugia malayi (strain TRS).